The sequence spans 190 residues: RNA-binding protein OPG065 (190 aa).

Residues 5 to 70 (YIDERSNAEI…DIPPRWFMTT (66 aa)) enclose the Z-binding domain. The region spanning 117–184 (NPVTVINEYC…AKLAVDKLLG (68 aa)) is the DRBM domain.

It belongs to the orthopoxvirus OPG065 family. Interacts with host G1P2/ISG15. Interacts with host EIF2AK2/PKR. Interacts with host ZBP1.

Its function is as follows. RNA-binding protein that plays a role in the inhibition of multiple cellular antiviral responses activated by double-stranded RNA (dsRNA), such as inhibition of PKR activation, necroptosis, and IFN-mediated antiviral activities. Recognizes and binds Z-RNA structures via its Z-binding domain and dsRNA via its DRBM domain: RNA-binding activity is required to escape host ZBP1-dependent necroptosis. Mechanistically, the Z-binding domain binds Z-RNAs that are produced during vaccinia virus infection, thereby competing with Z-RNA detection by host ZBP1, suppressing ZBP1-dependent necroptosis. Acts as a key inhibitor of the interferon response by blocking the phosphorylation and subsequent activation of IRF3 and IRF7 kinases that are required for interferon-alpha gene expression. Inhibits NF-kappa-B activation and the ubiquitin-like protein ISG15, which is an early antiviral protein. The binding with host ISG15 subsequently blocks host ISGylation. The protein is RNA-binding protein OPG065 (OPG065) of Vaccinia virus (strain Western Reserve) (VACV).